Here is a 318-residue protein sequence, read N- to C-terminus: Cytochrome f (318 aa).

A signal peptide spans 1–33 (MKNTFSWIKKEITRSISLSLMIYIITRTSISNA). 4 residues coordinate heme: Tyr34, Cys54, Cys57, and His58. The chain crosses the membrane as a helical span at residues 284–304 (VQGLLFFLASVILAQIFLVLK).

Belongs to the cytochrome f family. As to quaternary structure, the 4 large subunits of the cytochrome b6-f complex are cytochrome b6, subunit IV (17 kDa polypeptide, petD), cytochrome f and the Rieske protein, while the 4 small subunits are PetG, PetL, PetM and PetN. The complex functions as a dimer. It depends on heme as a cofactor.

The protein localises to the plastid. Its subcellular location is the chloroplast thylakoid membrane. In terms of biological role, component of the cytochrome b6-f complex, which mediates electron transfer between photosystem II (PSII) and photosystem I (PSI), cyclic electron flow around PSI, and state transitions. The protein is Cytochrome f of Oenothera biennis (German evening primrose).